The sequence spans 406 residues: Acetate kinase (406 aa).

Asn-7 provides a ligand contact to Mg(2+). Lys-14 is an ATP binding site. Arg-90 lines the substrate pocket. The Proton donor/acceptor role is filled by Asp-147. ATP is bound by residues His-207 to Gly-211, Asp-283 to Arg-285, and Gly-331 to Asn-335. A Mg(2+)-binding site is contributed by Glu-385.

The protein belongs to the acetokinase family. Homodimer. The cofactor is Mg(2+). Mn(2+) serves as cofactor.

It localises to the cytoplasm. It carries out the reaction acetate + ATP = acetyl phosphate + ADP. It participates in metabolic intermediate biosynthesis; acetyl-CoA biosynthesis; acetyl-CoA from acetate: step 1/2. In terms of biological role, catalyzes the formation of acetyl phosphate from acetate and ATP. Can also catalyze the reverse reaction. The polypeptide is Acetate kinase (Thermosipho africanus (strain TCF52B)).